Reading from the N-terminus, the 72-residue chain is DNA-directed RNA polymerase subunit epsilon (72 aa).

It belongs to the RNA polymerase subunit epsilon family. As to quaternary structure, RNAP is composed of a core of 2 alpha, a beta and a beta' subunit. The core is associated with a delta subunit, and at least one of epsilon or omega. When a sigma factor is associated with the core the holoenzyme is formed, which can initiate transcription.

It carries out the reaction RNA(n) + a ribonucleoside 5'-triphosphate = RNA(n+1) + diphosphate. Its function is as follows. A non-essential component of RNA polymerase (RNAP). This is DNA-directed RNA polymerase subunit epsilon from Lactiplantibacillus plantarum (strain ATCC BAA-793 / NCIMB 8826 / WCFS1) (Lactobacillus plantarum).